Here is a 215-residue protein sequence, read N- to C-terminus: Proteasome subunit beta (215 aa).

The propeptide at 1–12 (MLGEIQDKVYKG) is removed in mature form; by autocatalysis. Catalysis depends on T13, which acts as the Nucleophile.

The protein belongs to the peptidase T1B family. The 20S proteasome core is composed of 14 alpha and 14 beta subunits that assemble into four stacked heptameric rings, resulting in a barrel-shaped structure. The two inner rings, each composed of seven catalytic beta subunits, are sandwiched by two outer rings, each composed of seven alpha subunits. The catalytic chamber with the active sites is on the inside of the barrel. Has a gated structure, the ends of the cylinder being occluded by the N-termini of the alpha-subunits. Is capped at one or both ends by the proteasome regulatory ATPase, PAN.

Its subcellular location is the cytoplasm. It catalyses the reaction Cleavage of peptide bonds with very broad specificity.. The formation of the proteasomal ATPase PAN-20S proteasome complex, via the docking of the C-termini of PAN into the intersubunit pockets in the alpha-rings, triggers opening of the gate for substrate entry. Interconversion between the open-gate and close-gate conformations leads to a dynamic regulation of the 20S proteasome proteolysis activity. Component of the proteasome core, a large protease complex with broad specificity involved in protein degradation. This Archaeoglobus profundus (strain DSM 5631 / JCM 9629 / NBRC 100127 / Av18) protein is Proteasome subunit beta.